Consider the following 163-residue polypeptide: Transmembrane protein 278 (163 aa).

The segment at M1–T37 is disordered. 2 helical membrane passes run L51 to L71 and A105 to V125. Residues L136–R148 are compositionally biased toward pro residues. Residues L136 to D156 are disordered.

This sequence belongs to the TMEM88 family.

It localises to the membrane. This is Transmembrane protein 278 from Homo sapiens (Human).